A 276-amino-acid polypeptide reads, in one-letter code: MNFGGFIMGRFDEKIMLVTGATSGIGRAVAIRAAKEGATVVAVGRNEERGAAVVAAMEEAGGKGEFMKCDVSNKDAVKALFAEIQEKYGKLDVAVNNAGIVGASKTVEELEDDDWFQVIDANLNSCFFCCREEVKLMQPSGGAIVNVSSVAGMRGFPSAAAYVASKHAVSGLTKAVAVDYATKGITCNAICPAGTDTPLTERSSADIKTRMAEIAAQGKDPMEWLKNSMLSGKTETLQKKNATPEEQAATILYFASDEARHITGSIVASDGGFTTY.

Residues 70–71 (DV), Asn97, Tyr162, and Lys166 contribute to the NADP(+) site. Tyr162 serves as the catalytic Proton acceptor.

This sequence belongs to the short-chain dehydrogenases/reductases (SDR) family.

The enzyme catalyses 3-oxo-5beta-cholan-24-oate + NADPH + H(+) = isolithocholate + NADP(+). It carries out the reaction 12alpha-hydroxy-3-oxo-5beta-cholan-24-oate + NADPH + H(+) = isodeoxycholate + NADP(+). The catalysed reaction is 12alpha-hydroxy-3-oxo-5beta-cholan-24-oate + NADH + H(+) = isodeoxycholate + NAD(+). It catalyses the reaction 7alpha,12alpha-dihydroxy-3-oxo-5beta-cholan-24-oate + NADPH + H(+) = isocholate + NADP(+). The enzyme catalyses 3-oxochenodeoxycholate + NADPH + H(+) = isochenodeoxycholate + NADP(+). Functionally, involved in the modification of secondary bile acids into iso-bile acids (3beta-bile acids) via epimerization of the 3-OH group through a 3-oxo-intermediate. Catalyzes the reduction of 12-alpha-hydroxy-3-oxo-5-beta-cholan-24-oate (3-oxo-DCA) and 3-oxo-5-beta-cholan-24-oate (3-oxo-LCA) to yield isodeoxycholate (isoDCA) and isolithocholate (isoLCA), respectively. Is also able to catalyze the reduction of 3-dehydrocholate (3-oxo-CA or 7alpha,12alpha-dihydroxy-3-oxo-5beta-cholan-24-oate) and 7-alpha-hydroxy-3-oxo-5-beta-cholan-24-oate (3-oxo-CDCA), into isocholate (isoCA) and isochenodeoxycholate (isoCDCA), respectively. Accepts both NADPH and NADH as cosubstrates. The conversion of the abundant bile acid deoxycholate (DCA) into isoDCA by the gut bacterium R.gnavus favors the growth of the keystone commensal genus Bacteroides, since isoDCA is less cytotoxic than its parent compound, DCA; iso-bile acids have thus a potential role in modulating gut community composition. The polypeptide is 3beta-hydroxysteroid dehydrogenase (Mediterraneibacter gnavus (strain ATCC 29149 / DSM 114966 / JCM 6515 / VPI C7-9) (Ruminococcus gnavus)).